The primary structure comprises 452 residues: UDP-N-acetylmuramoylalanine--D-glutamate ligase (452 aa).

119–125 (GSNGKTT) is an ATP binding site.

It belongs to the MurCDEF family.

The protein localises to the cytoplasm. It carries out the reaction UDP-N-acetyl-alpha-D-muramoyl-L-alanine + D-glutamate + ATP = UDP-N-acetyl-alpha-D-muramoyl-L-alanyl-D-glutamate + ADP + phosphate + H(+). It functions in the pathway cell wall biogenesis; peptidoglycan biosynthesis. In terms of biological role, cell wall formation. Catalyzes the addition of glutamate to the nucleotide precursor UDP-N-acetylmuramoyl-L-alanine (UMA). The chain is UDP-N-acetylmuramoylalanine--D-glutamate ligase from Streptococcus pyogenes serotype M2 (strain MGAS10270).